The sequence spans 456 residues: Bifunctional protein GlmU (456 aa).

The pyrophosphorylase stretch occupies residues 1–229 (MLNNAMSVVI…LSEVEGVNNR (229 aa)). Residues 11 to 14 (LAAG), Lys25, Gln76, 81 to 82 (GT), 103 to 105 (YGD), Gly140, Glu154, Asn169, and Asn227 contribute to the UDP-N-acetyl-alpha-D-glucosamine site. Asp105 contributes to the Mg(2+) binding site. Asn227 provides a ligand contact to Mg(2+). Positions 230-250 (LQLSRLERVYQFEQAEKLLLA) are linker. The interval 251 to 456 (GVMLRDPARF…EGWRRPVKKK (206 aa)) is N-acetyltransferase. Positions 333 and 351 each coordinate UDP-N-acetyl-alpha-D-glucosamine. His363 acts as the Proton acceptor in catalysis. UDP-N-acetyl-alpha-D-glucosamine-binding residues include Tyr366 and Asn377. Acetyl-CoA is bound by residues Ala380, 386–387 (NY), Ser405, Ala423, and Arg440.

This sequence in the N-terminal section; belongs to the N-acetylglucosamine-1-phosphate uridyltransferase family. It in the C-terminal section; belongs to the transferase hexapeptide repeat family. As to quaternary structure, homotrimer. The cofactor is Mg(2+).

The protein localises to the cytoplasm. It catalyses the reaction alpha-D-glucosamine 1-phosphate + acetyl-CoA = N-acetyl-alpha-D-glucosamine 1-phosphate + CoA + H(+). The catalysed reaction is N-acetyl-alpha-D-glucosamine 1-phosphate + UTP + H(+) = UDP-N-acetyl-alpha-D-glucosamine + diphosphate. The protein operates within nucleotide-sugar biosynthesis; UDP-N-acetyl-alpha-D-glucosamine biosynthesis; N-acetyl-alpha-D-glucosamine 1-phosphate from alpha-D-glucosamine 6-phosphate (route II): step 2/2. Its pathway is nucleotide-sugar biosynthesis; UDP-N-acetyl-alpha-D-glucosamine biosynthesis; UDP-N-acetyl-alpha-D-glucosamine from N-acetyl-alpha-D-glucosamine 1-phosphate: step 1/1. It functions in the pathway bacterial outer membrane biogenesis; LPS lipid A biosynthesis. Catalyzes the last two sequential reactions in the de novo biosynthetic pathway for UDP-N-acetylglucosamine (UDP-GlcNAc). The C-terminal domain catalyzes the transfer of acetyl group from acetyl coenzyme A to glucosamine-1-phosphate (GlcN-1-P) to produce N-acetylglucosamine-1-phosphate (GlcNAc-1-P), which is converted into UDP-GlcNAc by the transfer of uridine 5-monophosphate (from uridine 5-triphosphate), a reaction catalyzed by the N-terminal domain. In Escherichia coli O7:K1 (strain IAI39 / ExPEC), this protein is Bifunctional protein GlmU.